We begin with the raw amino-acid sequence, 438 residues long: Aspartate--tRNA(Asp) ligase (438 aa).

E170 contacts L-aspartate. Positions 192-195 (QLYK) are aspartate. R214 contributes to the L-aspartate binding site. Residues 214–216 (RAE), 222–224 (RHL), and E361 contribute to the ATP site. E361 and S364 together coordinate Mg(2+). The L-aspartate site is built by S364 and R368. An ATP-binding site is contributed by 409 to 412 (GAER).

It belongs to the class-II aminoacyl-tRNA synthetase family. Type 2 subfamily. In terms of assembly, homodimer. Mg(2+) serves as cofactor.

It is found in the cytoplasm. It catalyses the reaction tRNA(Asp) + L-aspartate + ATP = L-aspartyl-tRNA(Asp) + AMP + diphosphate. In terms of biological role, catalyzes the attachment of L-aspartate to tRNA(Asp) in a two-step reaction: L-aspartate is first activated by ATP to form Asp-AMP and then transferred to the acceptor end of tRNA(Asp). Is specific for tRNA(Asp) since it aspartylates tRNA(Asn) 3 orders of magnitude less efficiently than tRNA(Asp). In Thermococcus kodakarensis (strain ATCC BAA-918 / JCM 12380 / KOD1) (Pyrococcus kodakaraensis (strain KOD1)), this protein is Aspartate--tRNA(Asp) ligase.